Consider the following 593-residue polypeptide: Proline--tRNA ligase (593 aa).

Belongs to the class-II aminoacyl-tRNA synthetase family. ProS type 1 subfamily. As to quaternary structure, homodimer.

Its subcellular location is the cytoplasm. It carries out the reaction tRNA(Pro) + L-proline + ATP = L-prolyl-tRNA(Pro) + AMP + diphosphate. Its function is as follows. Catalyzes the attachment of proline to tRNA(Pro) in a two-step reaction: proline is first activated by ATP to form Pro-AMP and then transferred to the acceptor end of tRNA(Pro). As ProRS can inadvertently accommodate and process non-cognate amino acids such as alanine and cysteine, to avoid such errors it has two additional distinct editing activities against alanine. One activity is designated as 'pretransfer' editing and involves the tRNA(Pro)-independent hydrolysis of activated Ala-AMP. The other activity is designated 'posttransfer' editing and involves deacylation of mischarged Ala-tRNA(Pro). The misacylated Cys-tRNA(Pro) is not edited by ProRS. The chain is Proline--tRNA ligase from Synechococcus sp. (strain CC9902).